We begin with the raw amino-acid sequence, 444 residues long: Glutamyl-tRNA reductase (444 aa).

Substrate is bound by residues threonine 49 to arginine 52, serine 109, glutamate 114 to glutamine 116, and glutamine 120. Cysteine 50 acts as the Nucleophile in catalysis. Glycine 189–glycine 194 contacts NADP(+).

It belongs to the glutamyl-tRNA reductase family. In terms of assembly, homodimer.

It catalyses the reaction (S)-4-amino-5-oxopentanoate + tRNA(Glu) + NADP(+) = L-glutamyl-tRNA(Glu) + NADPH + H(+). The protein operates within porphyrin-containing compound metabolism; protoporphyrin-IX biosynthesis; 5-aminolevulinate from L-glutamyl-tRNA(Glu): step 1/2. Its function is as follows. Catalyzes the NADPH-dependent reduction of glutamyl-tRNA(Glu) to glutamate 1-semialdehyde (GSA). The sequence is that of Glutamyl-tRNA reductase from Bacillus cereus (strain ATCC 14579 / DSM 31 / CCUG 7414 / JCM 2152 / NBRC 15305 / NCIMB 9373 / NCTC 2599 / NRRL B-3711).